Reading from the N-terminus, the 2167-residue chain is RNA editing associated helicase 2 (2167 aa).

The transit peptide at 1–30 (MRAIRLTVACRYLGPFRSVTLSPVVLPVRL) directs the protein to the mitochondrion. Disordered stretches follow at residues 503 to 593 (RARG…DEAT) and 937 to 969 (ENAT…PTNV). Residues 532–541 (SSTQTPSSST) are compositionally biased toward low complexity. One can recognise a DRBM domain in the interval 1024-1095 (DAKTVLQRYC…AMHALALLRR (72 aa)). A Helicase ATP-binding domain is found at 1348 to 1513 (LRAISSNQIV…FGNAPIINVE (166 aa)). 1361 to 1368 (GTTGCGKT) lines the ATP pocket. The Important for binding to gRNA motif lies at 1366 to 1367 (GK). Positions 1460–1463 (DEIH) match the DEAH box motif. Residues 1585 to 1762 (AIDHAVRSLD…SLCLQILALD (178 aa)) form the Helicase C-terminal domain. The interval 2132–2167 (IIEPCTEPKGGSSEAEKTHVNSSHTPTTSAEAGGDS) is disordered. Residues 2151–2161 (VNSSHTPTTSA) are compositionally biased toward polar residues.

Belongs to the DEAD box helicase family. DEAH subfamily. As to quaternary structure, component of the REH2-associated complex (REH2C) composed of helicase REH2, associated factors H2F1 and H2F2, and mRNAs at various editing stages; the formation of the complex is RNA-independent. Within the complex, interacts with H2F1; the interaction is direct. Interacts transiently, in a RNA-dependent manner, with various editing complexes including the RNA editing core (RECC) complex, the gRNA-binding (GRBC) complex (also known as the MRB1 complex) and the RNA editing mediator (REMC) complex. Interacts with GAP1/GRBC2 via RNA forming a variant of the GRBC complex known as REH2-GRBC complex. Interacts with mitochondrial ribosomes.

Its subcellular location is the mitochondrion. It catalyses the reaction ATP + H2O = ADP + phosphate + H(+). ATP-dependent RNA helicase that unwinds RNA in a 3' to 5' direction and that plays an important role in mitochondrial mRNA editing, a process involving the addition and deletion of uridine (U) nucleotides in the pre-mRNA. As part of the RET2-containing gRNA-binding (RET2-GRBC) complex, acts as a scaffold for the assembly of mRNA-gRNA hybrids and the recruitment of the RNA editing core (RECC) complex. Regulates several steps of mRNA editing by the MRBC3010/GRBC6 containing gRNA-binding (MRBC3010-GRBC) complex including loading of unedited mRNA, editing in the first sequence block and subsequent editing progression across multiple sequence blocks. Also, regulates the RNA substrate content of the MRBC3010-GRBC complex as well as the association of this complex with mitoribosomes. The polypeptide is RNA editing associated helicase 2 (Trypanosoma brucei brucei (strain 927/4 GUTat10.1)).